The following is a 104-amino-acid chain: Large ribosomal subunit protein bL21c (104 aa).

This sequence belongs to the bacterial ribosomal protein bL21 family. Part of the 50S ribosomal subunit.

Its subcellular location is the plastid. The protein localises to the chloroplast. In terms of biological role, this protein binds to 23S rRNA. The protein is Large ribosomal subunit protein bL21c of Guillardia theta (Cryptophyte).